We begin with the raw amino-acid sequence, 279 residues long: Shikimate dehydrogenase (NADP(+)) (279 aa).

Shikimate is bound by residues 17–19 (SLS) and Thr64. The Proton acceptor role is filled by Lys68. Residue Asp80 coordinates NADP(+). Asn89 and Asp105 together coordinate shikimate. Residues 129–133 (GAGGS), 153–158 (NRTAKK), and Leu221 contribute to the NADP(+) site. Tyr223 contributes to the shikimate binding site. Gly245 is an NADP(+) binding site.

Belongs to the shikimate dehydrogenase family. In terms of assembly, homodimer.

It catalyses the reaction shikimate + NADP(+) = 3-dehydroshikimate + NADPH + H(+). It participates in metabolic intermediate biosynthesis; chorismate biosynthesis; chorismate from D-erythrose 4-phosphate and phosphoenolpyruvate: step 4/7. Functionally, involved in the biosynthesis of the chorismate, which leads to the biosynthesis of aromatic amino acids. Catalyzes the reversible NADPH linked reduction of 3-dehydroshikimate (DHSA) to yield shikimate (SA). The sequence is that of Shikimate dehydrogenase (NADP(+)) from Idiomarina loihiensis (strain ATCC BAA-735 / DSM 15497 / L2-TR).